The chain runs to 362 residues: uncharacterized protein (362 aa).

The segment covering 314–323 (GEEKEPKQES) has biased composition (basic and acidic residues). The tract at residues 314 to 362 (GEEKEPKQESQEQLFNPFTIDEMLTEEQQQQQEEENNATEEEGDTVKLG) is disordered. A compositionally biased stretch (acidic residues) spans 345 to 356 (QEEENNATEEEG).

This is an uncharacterized protein from Acidianus two-tailed virus (ATV).